The chain runs to 250 residues: Cell division protein ZapD (250 aa).

This sequence belongs to the ZapD family. In terms of assembly, interacts with FtsZ.

It is found in the cytoplasm. Cell division factor that enhances FtsZ-ring assembly. Directly interacts with FtsZ and promotes bundling of FtsZ protofilaments, with a reduction in FtsZ GTPase activity. The protein is Cell division protein ZapD of Pectobacterium carotovorum subsp. carotovorum (strain PC1).